The primary structure comprises 1070 residues: DNA-directed RNA polymerase subunit beta (1070 aa).

Belongs to the RNA polymerase beta chain family. In terms of assembly, in plastids the minimal PEP RNA polymerase catalytic core is composed of four subunits: alpha, beta, beta', and beta''. When a (nuclear-encoded) sigma factor is associated with the core the holoenzyme is formed, which can initiate transcription.

Its subcellular location is the plastid. The protein resides in the chloroplast. The catalysed reaction is RNA(n) + a ribonucleoside 5'-triphosphate = RNA(n+1) + diphosphate. Functionally, DNA-dependent RNA polymerase catalyzes the transcription of DNA into RNA using the four ribonucleoside triphosphates as substrates. The polypeptide is DNA-directed RNA polymerase subunit beta (Cucumis sativus (Cucumber)).